The following is a 149-amino-acid chain: Calmodulin (149 aa).

Ala-2 is modified (N-acetylalanine). 4 EF-hand domains span residues 8 to 43 (EQIA…LGQN), 44 to 79 (PTEA…KMKD), 81 to 116 (DSEE…LGEK), and 117 to 149 (LTDE…MMAK). Positions 21, 23, 25, 27, 32, 57, 59, 61, 63, 68, 94, 96, 98, and 105 each coordinate Ca(2+). The residue at position 116 (Lys-116) is an N6,N6,N6-trimethyllysine. Ca(2+) contacts are provided by Asp-130, Asp-132, Asp-134, Gln-136, and Glu-141.

It belongs to the calmodulin family.

In terms of biological role, calmodulin mediates the control of a large number of enzymes, ion channels and other proteins by Ca(2+). Among the enzymes to be stimulated by the calmodulin-Ca(2+) complex are a number of protein kinases and phosphatases. This Macrocystis pyrifera (Giant kelp) protein is Calmodulin.